A 20-amino-acid polypeptide reads, in one-letter code: Fibrinogen beta chain (20 aa).

Position 5 is a sulfotyrosine (tyrosine 5).

In terms of assembly, heterohexamer; disulfide linked. Contains 2 sets of 3 non-identical chains (alpha, beta and gamma). The 2 heterotrimers are in head to head conformation with the N-termini in a small central domain. In terms of processing, conversion of fibrinogen to fibrin is triggered by thrombin, which cleaves fibrinopeptides A and B from alpha and beta chains, and thus exposes the N-terminal polymerization sites responsible for the formation of the soft clot.

It localises to the secreted. Its function is as follows. Cleaved by the protease thrombin to yield monomers which, together with fibrinogen alpha (FGA) and fibrinogen gamma (FGG), polymerize to form an insoluble fibrin matrix. Fibrin has a major function in hemostasis as one of the primary components of blood clots. In addition, functions during the early stages of wound repair to stabilize the lesion and guide cell migration during re-epithelialization. Was originally thought to be essential for platelet aggregation, based on in vitro studies using anticoagulated blood. However subsequent studies have shown that it is not absolutely required for thrombus formation in vivo. Enhances expression of SELP in activated platelets. Maternal fibrinogen is essential for successful pregnancy. Fibrin deposition is also associated with infection, where it protects against IFNG-mediated hemorrhage. May also facilitate the antibacterial immune response via both innate and T-cell mediated pathways. This is Fibrinogen beta chain (FGB) from Capra hircus (Goat).